Consider the following 476-residue polypeptide: Serine/threonine-protein kinase WAG1 (476 aa).

A Protein kinase domain is found at 93-400 (FKLVRHLGTG…AQDIKRHEFF (308 aa)). ATP is bound by residues 99–107 (LGTGNLGRV) and Lys-124. Asp-219 functions as the Proton acceptor in the catalytic mechanism.

Belongs to the protein kinase superfamily. Ser/Thr protein kinase family. In terms of tissue distribution, expressed in root tips and lateral root primordia.

Its subcellular location is the cytoplasm. It is found in the cytosol. The enzyme catalyses L-seryl-[protein] + ATP = O-phospho-L-seryl-[protein] + ADP + H(+). It carries out the reaction L-threonyl-[protein] + ATP = O-phospho-L-threonyl-[protein] + ADP + H(+). In terms of biological role, serine/threonine-protein kinase involved in the regulation of auxin signaling. Acts as a positive regulator of cellular auxin efflux and regulates organ development by enhancing PIN-mediated polar auxin transport. Phosphorylates conserved serine residues in the PIN auxin efflux carriers. Phosphorylation of PIN proteins is required and sufficient for apical-basal PIN polarity that enables directional intercellular auxin fluxes, which mediate differential growth, tissue patterning and organogenesis. Acts as a suppressor of root waving. This chain is Serine/threonine-protein kinase WAG1 (WAG1), found in Arabidopsis thaliana (Mouse-ear cress).